The chain runs to 270 residues: MIOREX complex component 3 (270 aa).

The N-terminal 12 residues, 1–12 (MSRTIPFLFKLV), are a transit peptide targeting the mitochondrion.

As to quaternary structure, associates with the mitochondrial ribosome.

It is found in the mitochondrion. Functionally, component of MIOREX complexes, large expressome-like assemblies of ribosomes with factors involved in all the steps of post-transcriptional gene expression. The polypeptide is MIOREX complex component 3 (Saccharomyces cerevisiae (strain ATCC 204508 / S288c) (Baker's yeast)).